Here is a 217-residue protein sequence, read N- to C-terminus: MTAPLTLALSKGRIFEETLPLLAAAGVQVAEDPETSRKLILPTTDPNLRVIIVRASDVPTYVEYGAADFGVAGKDVLVEHGGSGLYQPIDLNIARCRMSVAVPAGFDYANAVRQGARLRVATKYVETAREHFAAKGVHVDLIKLYGSMELAPLVGLADAIVDLVSSGGTLKANNLVEVEEIMAISSRLVVNQAALKLKRAALKPILDAFERASQNGG.

The protein belongs to the ATP phosphoribosyltransferase family. Short subfamily. Heteromultimer composed of HisG and HisZ subunits.

It localises to the cytoplasm. The catalysed reaction is 1-(5-phospho-beta-D-ribosyl)-ATP + diphosphate = 5-phospho-alpha-D-ribose 1-diphosphate + ATP. Its pathway is amino-acid biosynthesis; L-histidine biosynthesis; L-histidine from 5-phospho-alpha-D-ribose 1-diphosphate: step 1/9. Functionally, catalyzes the condensation of ATP and 5-phosphoribose 1-diphosphate to form N'-(5'-phosphoribosyl)-ATP (PR-ATP). Has a crucial role in the pathway because the rate of histidine biosynthesis seems to be controlled primarily by regulation of HisG enzymatic activity. This chain is ATP phosphoribosyltransferase, found in Burkholderia orbicola (strain AU 1054).